A 593-amino-acid chain; its full sequence is Aspartate--tRNA(Asp/Asn) ligase (593 aa).

E173 provides a ligand contact to L-aspartate. The segment at 197 to 200 (QLFK) is aspartate. L-aspartate is bound at residue R219. ATP is bound by residues 219 to 221 (RDE) and Q228. An L-aspartate-binding site is contributed by H451. E485 is an ATP binding site. R492 lines the L-aspartate pocket. 537-540 (GIDR) serves as a coordination point for ATP.

The protein belongs to the class-II aminoacyl-tRNA synthetase family. Type 1 subfamily. Homodimer.

Its subcellular location is the cytoplasm. The enzyme catalyses tRNA(Asx) + L-aspartate + ATP = L-aspartyl-tRNA(Asx) + AMP + diphosphate. Functionally, aspartyl-tRNA synthetase with relaxed tRNA specificity since it is able to aspartylate not only its cognate tRNA(Asp) but also tRNA(Asn). Reaction proceeds in two steps: L-aspartate is first activated by ATP to form Asp-AMP and then transferred to the acceptor end of tRNA(Asp/Asn). The sequence is that of Aspartate--tRNA(Asp/Asn) ligase from Legionella pneumophila subsp. pneumophila (strain Philadelphia 1 / ATCC 33152 / DSM 7513).